A 41-amino-acid chain; its full sequence is Mu-conotoxin pn4c (41 aa).

The propeptide occupies Asp-1 to Arg-24.

Belongs to the conotoxin M superfamily. Contains 3 disulfide bonds. They are not added, since framework IV presents two different connectivities (I-V, II-III, IV-VI and I-III, II-V, IV-VI). As to expression, expressed by the venom duct.

The protein resides in the secreted. In terms of biological role, mu-conotoxins block voltage-gated sodium channels (Nav). Blocks reversibly sodium channels in molluskan neurons, but has no effect on sodium currents in bovine chromaffin cells or in rat brain synaptosomes. Induces paralysis in mollusks (C.retripictus). The chain is Mu-conotoxin pn4c from Conus pennaceus (Feathered cone).